Consider the following 345-residue polypeptide: MSNMMKALVKAKPEVGLWMENVPVPEVGPNDVLIRVKKSAICGTDVHIWNWDQWAQKTIPVPMVVGHEFSGEIAEIGSAVTRYHVGERVSGEGHIVCGKCRNCRAGRGHLCRNTLGVGVNRPGSFGEFVCIPESNVVPIPDDISDEIAAIFDPFGNAVHTALSFDLVGEDVLVTGAGPIGIMGALVAKRSGARKVVITDINPHRLELARKLGIDHVVDASKENLADVMKAIGMTEGFDVGLEMSGAAPAFRDMIDKMNNGGKIAILGIAPAGFEIDWNKVIFKMLNLKGIYGREMFETWYKMIAFVQGGLDLAPIITHRIGIDDFRDGFEAMRSGNSGKVVMDWM.

C42 contacts Zn(2+). Catalysis depends on charge relay system residues T44 and H47. Zn(2+) contacts are provided by H67, E68, C97, C100, C103, and C111. NAD(+) is bound by residues I179, D199, R204, 266 to 268 (LGI), and 290 to 291 (IY).

Belongs to the zinc-containing alcohol dehydrogenase family. Homotetramer. It depends on Zn(2+) as a cofactor.

The protein localises to the cytoplasm. The catalysed reaction is L-threonine + NAD(+) = (2S)-2-amino-3-oxobutanoate + NADH + H(+). Its pathway is amino-acid degradation; L-threonine degradation via oxydo-reductase pathway; glycine from L-threonine: step 1/2. Catalyzes the NAD(+)-dependent oxidation of L-threonine to 2-amino-3-ketobutyrate. The polypeptide is L-threonine 3-dehydrogenase (Rhizobium johnstonii (strain DSM 114642 / LMG 32736 / 3841) (Rhizobium leguminosarum bv. viciae)).